A 2104-amino-acid chain; its full sequence is Myosin type-2 heavy chain 2 (2104 aa).

The region spanning 35-85 is the Myosin N-terminal SH3-like domain; it reads DERTWIWIPDSKESFVKAWIVEDLGEKYRVKLERDGSERIVDGFDAEKVNP. Positions 89-767 constitute a Myosin motor domain; that stretch reads DMVDDMAALT…VLGSLEDRRN (679 aa). 182–189 serves as a coordination point for ATP; it reads GESGAGKT. The tract at residues 646–660 is actin-binding; the sequence is LSSLMHQLEATQPHF. A coiled-coil region spans residues 829-2104; that stretch reads LGTTQTDEYL…RSNRSPSVLR (1276 aa). Disordered stretches follow at residues 1245–1278 and 1398–1426; these read NRSV…DGNN and MEFT…SKRS. The segment covering 1246 to 1259 has biased composition (polar residues); sequence RSVTQHTLDGNSPH. Residues 1261–1278 show a composition bias toward basic and acidic residues; sequence SFEEKHSGDPLKRIDGNN. The segment covering 1409 to 1424 has biased composition (polar residues); it reads SKISNLPSSQPGSPSK. At serine 1421 the chain carries Phosphoserine.

The protein belongs to the TRAFAC class myosin-kinesin ATPase superfamily. Myosin family. As to quaternary structure, binds to cdc4 and rlc1.

In terms of biological role, stabilizes the F-actin cables forming the F-actin ring that surrounds the nucleus during interphase. May work in conjunction with myo2. This chain is Myosin type-2 heavy chain 2 (myo3), found in Schizosaccharomyces pombe (strain 972 / ATCC 24843) (Fission yeast).